A 155-amino-acid polypeptide reads, in one-letter code: Cytochrome c-550 (155 aa).

The first 20 residues, 1–20 (MKISIYATLAAITLALPAAA), serve as a signal peptide directing secretion. The residue at position 21 (Gln21) is a Pyrrolidone carboxylic acid. The heme c site is built by Cys35, Cys38, His39, and Met120. A propeptide spanning residues 150-155 (AEGESN) is cleaved from the precursor.

Post-translationally, binds 1 heme c group covalently per subunit.

The sequence is that of Cytochrome c-550 (cycA) from Paracoccus denitrificans.